The chain runs to 265 residues: Mlc titration factor A (265 aa).

Zn(2+)-binding residues include His111, His148, His152, and Glu211.

This sequence belongs to the MtfA family. In terms of assembly, interacts with Mlc. The cofactor is Zn(2+).

The protein localises to the cytoplasm. Involved in the modulation of the activity of the glucose-phosphotransferase system (glucose-PTS). Interacts with the transcriptional repressor Mlc, preventing its interaction with DNA and leading to the modulation of expression of genes regulated by Mlc, including ptsG, which encodes the PTS system glucose-specific EIICB component. In terms of biological role, shows zinc-dependent metallopeptidase activity. This is Mlc titration factor A from Shigella sonnei (strain Ss046).